The chain runs to 268 residues: MRLYRDWALVLRQHNLGEADRIVTLLTRDHGLVRAVAKGVRRTRSKFGARLEPFAYIDAQLHPGRNLDIVTQVVSIDAFATDIVSDYGRYTCGCAMLETAERLAGEERAPAPTLHRLTVSALRAVADGNRPRDLLLDAYLLRAMGIAGWAPALTACARCATPGPHRAFHIAAGGSVCVHCRPAGSTTPPRGVLELMSALHDGDWGTAQQAPQSHRSYASGLVAAHLQWHLERQLKTLPLVERTHQAYQVDRSIAERRAALVRQDMACG.

Belongs to the RecO family.

Functionally, involved in DNA repair and RecF pathway recombination. In Mycobacterium leprae (strain Br4923), this protein is DNA repair protein RecO.